The following is a 376-amino-acid chain: Ribonucleoside-diphosphate reductase 1 subunit beta (376 aa).

Fe cation is bound by residues aspartate 85, glutamate 116, and histidine 119. Residue tyrosine 123 is part of the active site. 3 residues coordinate Fe cation: glutamate 205, glutamate 239, and histidine 242.

Belongs to the ribonucleoside diphosphate reductase small chain family. In terms of assembly, tetramer of two alpha (R1) and two beta (R2) subunits. The B1 protein is a dimer of alpha subunits. A radical transfer pathway occurs between Tyr-123 of R2 and R1. Requires Fe cation as cofactor.

It carries out the reaction a 2'-deoxyribonucleoside 5'-diphosphate + [thioredoxin]-disulfide + H2O = a ribonucleoside 5'-diphosphate + [thioredoxin]-dithiol. Functionally, provides the precursors necessary for DNA synthesis. Catalyzes the biosynthesis of deoxyribonucleotides from the corresponding ribonucleotides. R2 contains the tyrosyl radical required for catalysis. In Salmonella typhimurium (strain LT2 / SGSC1412 / ATCC 700720), this protein is Ribonucleoside-diphosphate reductase 1 subunit beta (nrdB).